Reading from the N-terminus, the 1045-residue chain is Collagen alpha-1(VI) chain (1045 aa).

Positions 1–24 are cleaved as a signal peptide; the sequence is MKMLQGRLPLTVLHLFLLLGGGMT. The VWFA 1 domain occupies 65–255; it reads DIFFVLDTSE…LTDDEIDNTI (191 aa). A disordered region spans residues 277–613; the sequence is PSRGLSGPSG…GPPGPGGPPG (337 aa). Residues 280 to 540 are triple-helical region; the sequence is GLSGPSGPPG…RGDDGRPGNG (261 aa). Positions 297-309 are enriched in low complexity; that stretch reads PGLPGDRGLPGDP. Residues 327-360 are compositionally biased toward basic and acidic residues; that stretch reads QGIRGEKGGRGAKGSKGDKGKRGIDGVDGQKGED. Residues 375–392 show a composition bias toward low complexity; sequence DGAPGSSGPKGDPGPYGT. Gly residues predominate over residues 400–409; the sequence is GTPGTGGRPG. 2 consecutive short sequence motifs (cell attachment site) follow at residues 501–503 and 554–556; these read RGD. Positions 600 to 613 are enriched in pro residues; sequence EGPPGPPGPGGPPG. 2 consecutive VWFA domains span residues 638 to 825 and 849 to 1035; these read DLLF…LHNV and DITM…YQSI.

The protein belongs to the type VI collagen family.

The protein localises to the secreted. It is found in the extracellular space. Its subcellular location is the extracellular matrix. Its function is as follows. Collagen VI acts as a cell-binding protein. This is Collagen alpha-1(VI) chain (col6a1) from Xenopus laevis (African clawed frog).